The sequence spans 416 residues: Secreted RxLR effector protein 25 (416 aa).

Residues 1-20 form the signal peptide; that stretch reads MRSWLLLLVGLSSYFALSTS. Positions 49 to 88 match the RxLR-dEER motif; the sequence is RKLRAPGGDTNTLKDSGKARREKKVWKLFCRVFLQLDDEK.

This sequence belongs to the RxLR effector family.

It is found in the secreted. It localises to the host cytoplasm. Its subcellular location is the host nucleus. Its function is as follows. Effector that partially suppresses the tobacco programmed cell death induced by cell death-inducing proteins. The chain is Secreted RxLR effector protein 25 from Plasmopara viticola (Downy mildew of grapevine).